The following is a 666-amino-acid chain: Secreted protein ARB_01864 (666 aa).

The N-terminal stretch at 1 to 18 (MRFSTLVSLAAWAAAALA) is a signal peptide. N-linked (GlcNAc...) asparagine glycosylation is found at Asn160, Asn216, Asn342, Asn405, Asn594, Asn600, and Asn662. A disordered region spans residues 323–353 (RGSMKPRGVPNPTRRAIKGNATTSTQPYQHP).

Its subcellular location is the secreted. The polypeptide is Secreted protein ARB_01864 (Arthroderma benhamiae (strain ATCC MYA-4681 / CBS 112371) (Trichophyton mentagrophytes)).